The primary structure comprises 717 residues: Fatty acid oxidation complex subunit alpha (717 aa).

An enoyl-CoA hydratase/isomerase region spans residues 1-190 (MIHAGNAITV…KDGAVDAVVA (190 aa)). D298 is a substrate binding site. The 3-hydroxyacyl-CoA dehydrogenase stretch occupies residues 313 to 717 (HPVNQAAVLG…MAANNKKFYG (405 aa)). Residues M326, D345, 402 to 404 (VTE), K409, and S431 contribute to the NAD(+) site. H452 functions as the For 3-hydroxyacyl-CoA dehydrogenase activity in the catalytic mechanism. NAD(+) is bound at residue N455. Residue N502 coordinates substrate.

It in the N-terminal section; belongs to the enoyl-CoA hydratase/isomerase family. In the C-terminal section; belongs to the 3-hydroxyacyl-CoA dehydrogenase family. As to quaternary structure, heterotetramer of two alpha chains (FadB) and two beta chains (FadA).

It catalyses the reaction a (3S)-3-hydroxyacyl-CoA + NAD(+) = a 3-oxoacyl-CoA + NADH + H(+). The catalysed reaction is a (3S)-3-hydroxyacyl-CoA = a (2E)-enoyl-CoA + H2O. It carries out the reaction a 4-saturated-(3S)-3-hydroxyacyl-CoA = a (3E)-enoyl-CoA + H2O. The enzyme catalyses (3S)-3-hydroxybutanoyl-CoA = (3R)-3-hydroxybutanoyl-CoA. It catalyses the reaction a (3Z)-enoyl-CoA = a 4-saturated (2E)-enoyl-CoA. The catalysed reaction is a (3E)-enoyl-CoA = a 4-saturated (2E)-enoyl-CoA. Its pathway is lipid metabolism; fatty acid beta-oxidation. Involved in the aerobic and anaerobic degradation of long-chain fatty acids via beta-oxidation cycle. Catalyzes the formation of 3-oxoacyl-CoA from enoyl-CoA via L-3-hydroxyacyl-CoA. It can also use D-3-hydroxyacyl-CoA and cis-3-enoyl-CoA as substrate. The sequence is that of Fatty acid oxidation complex subunit alpha from Acinetobacter baumannii (strain ACICU).